The primary structure comprises 508 residues: Light-independent protochlorophyllide reductase subunit B (508 aa).

Asp36 is a [4Fe-4S] cluster binding site. The active-site Proton donor is the Asp294. Residue 429–430 (GM) coordinates substrate.

It belongs to the ChlB/BchB/BchZ family. As to quaternary structure, protochlorophyllide reductase is composed of three subunits; ChlL, ChlN and ChlB. Forms a heterotetramer of two ChlB and two ChlN subunits. It depends on [4Fe-4S] cluster as a cofactor.

The enzyme catalyses chlorophyllide a + oxidized 2[4Fe-4S]-[ferredoxin] + 2 ADP + 2 phosphate = protochlorophyllide a + reduced 2[4Fe-4S]-[ferredoxin] + 2 ATP + 2 H2O. It functions in the pathway porphyrin-containing compound metabolism; chlorophyll biosynthesis (light-independent). Component of the dark-operative protochlorophyllide reductase (DPOR) that uses Mg-ATP and reduced ferredoxin to reduce ring D of protochlorophyllide (Pchlide) to form chlorophyllide a (Chlide). This reaction is light-independent. The NB-protein (ChlN-ChlB) is the catalytic component of the complex. The chain is Light-independent protochlorophyllide reductase subunit B from Thermosynechococcus vestitus (strain NIES-2133 / IAM M-273 / BP-1).